We begin with the raw amino-acid sequence, 289 residues long: Acetyl-coenzyme A carboxylase carboxyl transferase subunit beta (289 aa).

Residues 28 to 289 enclose the CoA carboxyltransferase N-terminal domain; sequence VMTKCPKCKK…QGGEMAVWQS (262 aa). The Zn(2+) site is built by C32, C35, C51, and C54. The C4-type zinc-finger motif lies at 32 to 54; that stretch reads CPKCKKIMYTKEVLKNLKVCVNC.

This sequence belongs to the AccD/PCCB family. As to quaternary structure, acetyl-CoA carboxylase is a heterohexamer composed of biotin carboxyl carrier protein (AccB), biotin carboxylase (AccC) and two subunits each of ACCase subunit alpha (AccA) and ACCase subunit beta (AccD). The cofactor is Zn(2+).

The protein resides in the cytoplasm. The enzyme catalyses N(6)-carboxybiotinyl-L-lysyl-[protein] + acetyl-CoA = N(6)-biotinyl-L-lysyl-[protein] + malonyl-CoA. It participates in lipid metabolism; malonyl-CoA biosynthesis; malonyl-CoA from acetyl-CoA: step 1/1. Component of the acetyl coenzyme A carboxylase (ACC) complex. Biotin carboxylase (BC) catalyzes the carboxylation of biotin on its carrier protein (BCCP) and then the CO(2) group is transferred by the transcarboxylase to acetyl-CoA to form malonyl-CoA. The chain is Acetyl-coenzyme A carboxylase carboxyl transferase subunit beta from Bacillus thuringiensis subsp. konkukian (strain 97-27).